Reading from the N-terminus, the 163-residue chain is Large ribosomal subunit protein uL15 (163 aa).

This sequence belongs to the universal ribosomal protein uL15 family. In terms of assembly, part of the 50S ribosomal subunit.

Binds to the 23S rRNA. This Orientia tsutsugamushi (strain Boryong) (Rickettsia tsutsugamushi) protein is Large ribosomal subunit protein uL15.